A 57-amino-acid polypeptide reads, in one-letter code: UPF0391 membrane protein Arad_3976 (57 aa).

The next 2 membrane-spanning stretches (helical) occupy residues 4-24 (WAII…SGVS) and 33-53 (VLFA…VMAG).

This sequence belongs to the UPF0391 family.

The protein localises to the cell membrane. The protein is UPF0391 membrane protein Arad_3976 of Rhizobium rhizogenes (strain K84 / ATCC BAA-868) (Agrobacterium radiobacter).